The following is a 274-amino-acid chain: Shikimate dehydrogenase (NADP(+)) (274 aa).

Shikimate-binding positions include 14–16 (SKS) and Thr-61. The active-site Proton acceptor is Lys-65. Residue Glu-77 coordinates NADP(+). 2 residues coordinate shikimate: Asn-86 and Asp-102. NADP(+)-binding positions include 126-130 (GAGGA), 149-154 (NRTLEK), and Met-212. Shikimate is bound at residue Tyr-214. Residue Gly-237 coordinates NADP(+).

This sequence belongs to the shikimate dehydrogenase family. As to quaternary structure, homodimer.

The enzyme catalyses shikimate + NADP(+) = 3-dehydroshikimate + NADPH + H(+). It participates in metabolic intermediate biosynthesis; chorismate biosynthesis; chorismate from D-erythrose 4-phosphate and phosphoenolpyruvate: step 4/7. Its function is as follows. Involved in the biosynthesis of the chorismate, which leads to the biosynthesis of aromatic amino acids. Catalyzes the reversible NADPH linked reduction of 3-dehydroshikimate (DHSA) to yield shikimate (SA). The sequence is that of Shikimate dehydrogenase (NADP(+)) from Actinobacillus pleuropneumoniae serotype 5b (strain L20).